The chain runs to 924 residues: Protein translocase subunit SecA (924 aa).

Residues Gln-87, 105–109 (GEGKT), and Asp-517 contribute to the ATP site. Residues 886 to 906 (VPAADRDPNDPSTWGKVGRNE) form a disordered region. Zn(2+) contacts are provided by Cys-908, Cys-910, Cys-919, and His-920.

This sequence belongs to the SecA family. Monomer and homodimer. Part of the essential Sec protein translocation apparatus which comprises SecA, SecYEG and auxiliary proteins SecDF-YajC and YidC. Requires Zn(2+) as cofactor.

It localises to the cell inner membrane. The protein resides in the cytoplasm. It catalyses the reaction ATP + H2O + cellular proteinSide 1 = ADP + phosphate + cellular proteinSide 2.. In terms of biological role, part of the Sec protein translocase complex. Interacts with the SecYEG preprotein conducting channel. Has a central role in coupling the hydrolysis of ATP to the transfer of proteins into and across the cell membrane, serving both as a receptor for the preprotein-SecB complex and as an ATP-driven molecular motor driving the stepwise translocation of polypeptide chains across the membrane. The protein is Protein translocase subunit SecA of Azorhizobium caulinodans (strain ATCC 43989 / DSM 5975 / JCM 20966 / LMG 6465 / NBRC 14845 / NCIMB 13405 / ORS 571).